The primary structure comprises 356 residues: NADH-quinone oxidoreductase subunit H (356 aa).

The next 8 membrane-spanning stretches (helical) occupy residues 18–38 (IIMI…IAYI), 87–107 (GVFL…WAVI), 120–140 (VGIL…IMAG), 166–186 (IGFV…SAVV), 205–225 (ILNW…VSAL), 265–285 (AITT…LPPI), 292–312 (WVPG…LIAM), and 333–353 (FLPL…FAGI).

Belongs to the complex I subunit 1 family. In terms of assembly, NDH-1 is composed of 14 different subunits. Subunits NuoA, H, J, K, L, M, N constitute the membrane sector of the complex.

It localises to the cell inner membrane. It carries out the reaction a quinone + NADH + 5 H(+)(in) = a quinol + NAD(+) + 4 H(+)(out). Its function is as follows. NDH-1 shuttles electrons from NADH, via FMN and iron-sulfur (Fe-S) centers, to quinones in the respiratory chain. The immediate electron acceptor for the enzyme in this species is believed to be ubiquinone. Couples the redox reaction to proton translocation (for every two electrons transferred, four hydrogen ions are translocated across the cytoplasmic membrane), and thus conserves the redox energy in a proton gradient. This subunit may bind ubiquinone. In Bradyrhizobium sp. (strain ORS 278), this protein is NADH-quinone oxidoreductase subunit H.